Consider the following 552-residue polypeptide: Probable acyl-activating enzyme 5, peroxisomal (552 aa).

The short motif at 550–552 (SRM) is the Microbody targeting signal element.

It belongs to the ATP-dependent AMP-binding enzyme family. In terms of tissue distribution, expressed in roots, stems and developing seeds.

The protein resides in the peroxisome. In terms of biological role, may act as an acid--thiol ligase that activates carboxylic acids by forming acyl-CoAs. The chain is Probable acyl-activating enzyme 5, peroxisomal (AAE5) from Arabidopsis thaliana (Mouse-ear cress).